The primary structure comprises 1192 residues: DNA ligase 1 (1192 aa).

2 disordered regions span residues 29 to 257 (ELNK…KEKE) and 280 to 517 (EKEL…KSTQ). Positions 42–56 (EAVVKEKVEKKEKKE) are enriched in basic and acidic residues. Residues 70 to 113 (EEEEEEQEEQDGEEEQEEEEEYQQQDEEIEEDINGEEEMELDEN) are compositionally biased toward acidic residues. Positions 141–155 (KTIENKETKKPEKQS) are enriched in basic and acidic residues. Acidic residues predominate over residues 172-198 (DDEEDEEDENKTDDNDLDDMLDDDSDN). Composition is skewed to basic and acidic residues over residues 199–257 (EKDS…KEKE) and 280–368 (EKEL…RANA). Composition is skewed to low complexity over residues 371–382 (KSSVPTSTSKNS) and 410–434 (STTTTTTTTTTSTATTISSKSISSP). Residues 435-467 (SKKEEKEVITSKKQVEATKVEVKKEKEKEKEKE) are compositionally biased toward basic and acidic residues. The segment covering 468-511 (KEDDEEEEEEEEDDDEKLEDIDEEEYEEEEEEDEEGISENEEEE) has biased composition (acidic residues). An interaction with target DNA region spans residues 724 to 733 (KLRIGLAERS). Glu-842 contacts ATP. Residue Lys-844 is the N6-AMP-lysine intermediate of the active site. Positions 849 and 865 each coordinate ATP. Glu-897 is a Mg(2+) binding site. The tract at residues 918 to 920 (ARK) is interaction with target DNA. Glu-996 serves as a coordination point for Mg(2+). Positions 1001, 1014, and 1020 each coordinate ATP. Positions 1157-1192 (DKSPEDATSSDQVVDMYQNQKINSQSSKINEKDEDY) are disordered. A compositionally biased stretch (polar residues) spans 1162-1184 (DATSSDQVVDMYQNQKINSQSSK).

The protein belongs to the ATP-dependent DNA ligase family. It depends on Mg(2+) as a cofactor.

The protein resides in the nucleus. It carries out the reaction ATP + (deoxyribonucleotide)n-3'-hydroxyl + 5'-phospho-(deoxyribonucleotide)m = (deoxyribonucleotide)n+m + AMP + diphosphate.. DNA ligase that seals nicks in double-stranded DNA during DNA replication, DNA recombination and DNA repair. The polypeptide is DNA ligase 1 (lig1) (Dictyostelium discoideum (Social amoeba)).